Consider the following 140-residue polypeptide: ATP synthase epsilon chain (140 aa).

It belongs to the ATPase epsilon chain family. As to quaternary structure, F-type ATPases have 2 components, CF(1) - the catalytic core - and CF(0) - the membrane proton channel. CF(1) has five subunits: alpha(3), beta(3), gamma(1), delta(1), epsilon(1). CF(0) has three main subunits: a, b and c.

The protein localises to the cell inner membrane. Its function is as follows. Produces ATP from ADP in the presence of a proton gradient across the membrane. The protein is ATP synthase epsilon chain of Vibrio parahaemolyticus serotype O3:K6 (strain RIMD 2210633).